Reading from the N-terminus, the 151-residue chain is Superoxide dismutase [Cu-Zn] 2 (151 aa).

Cu cation contacts are provided by histidine 44, histidine 46, and histidine 61. Cysteines 55 and 144 form a disulfide. Zn(2+) contacts are provided by histidine 61, histidine 69, histidine 78, and aspartate 81. Residue histidine 118 coordinates Cu cation.

Belongs to the Cu-Zn superoxide dismutase family. As to quaternary structure, homodimer. It depends on Cu cation as a cofactor. Zn(2+) serves as cofactor.

It is found in the cytoplasm. The catalysed reaction is 2 superoxide + 2 H(+) = H2O2 + O2. Destroys radicals which are normally produced within the cells and which are toxic to biological systems. In Zea mays (Maize), this protein is Superoxide dismutase [Cu-Zn] 2 (SODCC.1).